A 282-amino-acid polypeptide reads, in one-letter code: Pantothenate synthetase (282 aa).

M30 to H37 contributes to the ATP binding site. H37 functions as the Proton donor in the catalytic mechanism. Q61 lines the (R)-pantoate pocket. Beta-alanine is bound at residue Q61. G149–D152 contacts ATP. A (R)-pantoate-binding site is contributed by Q155. Residues V178 and K186–R189 each bind ATP.

The protein belongs to the pantothenate synthetase family. Homodimer.

Its subcellular location is the cytoplasm. The enzyme catalyses (R)-pantoate + beta-alanine + ATP = (R)-pantothenate + AMP + diphosphate + H(+). Its pathway is cofactor biosynthesis; (R)-pantothenate biosynthesis; (R)-pantothenate from (R)-pantoate and beta-alanine: step 1/1. In terms of biological role, catalyzes the condensation of pantoate with beta-alanine in an ATP-dependent reaction via a pantoyl-adenylate intermediate. The sequence is that of Pantothenate synthetase from Marinobacter nauticus (strain ATCC 700491 / DSM 11845 / VT8) (Marinobacter aquaeolei).